A 497-amino-acid polypeptide reads, in one-letter code: Aluminum-activated malate transporter 10 (497 aa).

6 consecutive transmembrane segments (helical) span residues lysine 66–methionine 86, proline 88–phenylalanine 108, valine 123–serine 143, valine 148–valine 168, alanine 173–glycine 193, and isoleucine 210–glycine 230. Disordered stretches follow at residues proline 413 to threonine 437 and aspartate 476 to serine 497. A compositionally biased stretch (basic and acidic residues) spans asparagine 417–threonine 436. Polar residues predominate over residues aspartate 487 to serine 497.

Belongs to the aromatic acid exporter (TC 2.A.85) family.

It is found in the membrane. Functionally, malate transporter. The protein is Aluminum-activated malate transporter 10 (ALMT10) of Arabidopsis thaliana (Mouse-ear cress).